The primary structure comprises 347 residues: Phosphoribosylformylglycinamidine cyclo-ligase (347 aa).

This sequence belongs to the AIR synthase family.

It localises to the cytoplasm. It carries out the reaction 2-formamido-N(1)-(5-O-phospho-beta-D-ribosyl)acetamidine + ATP = 5-amino-1-(5-phospho-beta-D-ribosyl)imidazole + ADP + phosphate + H(+). It participates in purine metabolism; IMP biosynthesis via de novo pathway; 5-amino-1-(5-phospho-D-ribosyl)imidazole from N(2)-formyl-N(1)-(5-phospho-D-ribosyl)glycinamide: step 2/2. This is Phosphoribosylformylglycinamidine cyclo-ligase from Prochlorococcus marinus (strain AS9601).